The sequence spans 706 residues: Choline transporter-like protein 2 (706 aa).

The Cytoplasmic portion of the chain corresponds to 1-33 (MGGERQHYYGKHGTPQKYDPTFKGPIYHRGCTD). T14 carries the phosphothreonine modification. A helical membrane pass occupies residues 34 to 54 (VICCVFLLLAIVGYVAVGIIA). Topologically, residues 55–232 (WTHGDPRKVI…RIFEDYTVSW (178 aa)) are extracellular. Residues N187 and N200 are each glycosylated (N-linked (GlcNAc...) asparagine). The chain crosses the membrane as a helical span at residues 233–253 (YWIIIGLVIAMVLSLLFIILL). The Cytoplasmic portion of the chain corresponds to 254–256 (RFL). The chain crosses the membrane as a helical span at residues 257–277 (AGIMVWVMIVMVILVLGYGIF). The Extracellular portion of the chain corresponds to 278-315 (HCYMEYSRLRGEAGSDISLVDLGFQTDLRVYLHLRQTW). A helical membrane pass occupies residues 316–336 (MAFMIILSILEVIIILLLIFL). Residues 337–364 (RKRILIAIALIKEASRAVGYVMCSMLYP) lie on the Cytoplasmic side of the membrane. A helical transmembrane segment spans residues 365–385 (LVTFLLLCLCIAYWASTAIFL). Residues 386–440 (STSNEAVYKIFSDTDCQAVGKTCNPENFSSSSEFHLCPGAHCQFAFYGGESTYHR) lie on the Extracellular side of the membrane. A helical transmembrane segment spans residues 441–461 (ALLGLQIFNAFMFFWLANFVL). Over 462–504 (ALGQVTLAGAFASYYWALKKPDDLPAFPLFSAFGRALRYHTGS) the chain is Cytoplasmic. Residues 505 to 525 (LAFGSLLLAIVQIIRVMLEYL) form a helical membrane-spanning segment. Residues 526–563 (DQRLKAAENKFAKFLMTCLKCCFWCLEKFIKFLNRNAY) are Extracellular-facing. The helical transmembrane segment at 564 to 584 (IMIAIYGTNFCTSARNAFFLL) threads the bilayer. At 585-599 (MRNIIRVAVLDKVTD) the chain is on the cytoplasmic side. A helical transmembrane segment spans residues 600 to 620 (FLFLLGKLLIVGSVGILAFFF). Residues 621–638 (FTHRIRIVQDTAPPLNYY) are Extracellular-facing. Residues 639 to 659 (WVPILTVIVGSYLIAHGFFSV) traverse the membrane as a helical segment. The Cytoplasmic segment spans residues 660–706 (YGMCVDTLFLCFLEDLERNDGSMERPYFMSPTLKRLLNKTNRKPAES).

This sequence belongs to the CTL (choline transporter-like) family. In terms of assembly, interacts with COCH. In terms of processing, N-glycosylated.

Its subcellular location is the cell membrane. The protein resides in the mitochondrion outer membrane. It carries out the reaction choline(out) + n H(+)(in) = choline(in) + n H(+)(out). The enzyme catalyses ethanolamine(out) + n H(+)(in) = ethanolamine(in) + n H(+)(out). Choline/H+ antiporter, mainly in mitochodria. Also acts as a low-affinity ethanolamine/H+ antiporter, regulating the supply of extracellular ethanolamine (Etn) for the CDP-Etn pathway, redistribute intracellular Etn and balance the CDP-Cho and CDP-Etn arms of the Kennedy pathway. The sequence is that of Choline transporter-like protein 2 (SLC44A2) from Sus scrofa (Pig).